A 366-amino-acid chain; its full sequence is Alanine racemase (366 aa).

Lysine 33 (proton acceptor; specific for D-alanine) is an active-site residue. An N6-(pyridoxal phosphate)lysine modification is found at lysine 33. Substrate is bound at residue arginine 129. Residue tyrosine 253 is the Proton acceptor; specific for L-alanine of the active site. Methionine 301 is a substrate binding site.

It belongs to the alanine racemase family. It depends on pyridoxal 5'-phosphate as a cofactor.

It carries out the reaction L-alanine = D-alanine. The protein operates within amino-acid biosynthesis; D-alanine biosynthesis; D-alanine from L-alanine: step 1/1. Catalyzes the interconversion of L-alanine and D-alanine. May also act on other amino acids. The chain is Alanine racemase (alr) from Xanthomonas axonopodis pv. citri (strain 306).